Here is a 386-residue protein sequence, read N- to C-terminus: Diels-Alderase phm7 (386 aa).

The beta-sandwich motif stretch occupies residues 1–223 (MSEPTSSSSL…MVRGWSARPW (223 aa)). Residues E51, N84, and K356 each coordinate substrate. A beta-barrel motif region spans residues 223–386 (WPTFMNDAYY…FGGQLQIPVP (164 aa)).

It belongs to the Diels-Alderase family.

It participates in secondary metabolite biosynthesis. Its activity is regulated as follows. 3-aminomethyl-p-menthane which is similar to the phomasetin substructure, dose-dependently inhibits phm7 activity in vitro and production of phomasetin in the fungus. Its function is as follows. Diels-Alderase; part of the gene cluster that mediates the biosynthesis of the trans-fused decalin-containing tetramic acid phomasetin, the stereochemical opposite of the HIV-1 integrase inhibitor equisetin. The PKS module of phm1 together with the enoylreductase phm4 catalyze the formation of the polyketide unit which is then conjugated to L-serine by the condensation domain of the phm1 NRPS module. Activity of the Dieckmann cyclase domain (RED) of phm1 results in release of the Dieckmann product intermediate. The Diels-Alderase phm7 then uses the Dieckmann product of phm1 as substrate and catalyzes the Diels-Alder cycloaddition to form the decalin ring of N-desmethylphomasetin. N-desmethylphomasetin is further methylated to phomasetin by the methyltransferase phm5. The chain is Diels-Alderase phm7 from Pyrenochaetopsis sp.